A 920-amino-acid chain; its full sequence is Anoctamin-4 (920 aa).

The Cytoplasmic portion of the chain corresponds to 1–323; it reads METSSSGITN…LYFAWLGWYT (323 aa). Residues 38–64 are disordered; sequence KDDDSLLHPGNLTSTSDDASRLEAGGE. The chain crosses the membrane as a helical span at residues 324-344; the sequence is GMLFPAAFIGLFVFLYGVITL. Residues 345-389 are Extracellular-facing; that stretch reads DHCQVSKEVCQATDIIMCPVCDKYCPFMRLSDSCVYAKVTHLFDN. Residues 390–410 form a helical membrane-spanning segment; that stretch reads GATVFFAVFMAVWATVFLEFW. At 411–470 the chain is on the cytoplasmic side; that stretch reads KRRRAVIAYDWDLIDWEEEEEEIRPQFEAKYSKKERMNPISGKPEPYQAFADKCSRLIVS. A helical transmembrane segment spans residues 471–491; it reads ASGIFFMICVVIAAVFGIVIY. The Extracellular segment spans residues 492–512; the sequence is RVVTVSTFAAFKWALIRNNSQ. Residue N509 is glycosylated (N-linked (GlcNAc...) asparagine). A helical transmembrane segment spans residues 513–533; the sequence is VATTGTAVCINFCIIMLLNVL. Topologically, residues 534–560 are cytoplasmic; sequence YEKVALLLTNLEQPRTESEWENSFTLK. The chain crosses the membrane as a helical span at residues 561–581; sequence MFLFQFVNLNSSTFYIAFFLG. Over 582 to 680 the chain is Extracellular; it reads RFTGHPGAYL…AYGLFDEYLE (99 aa). Residues 681–701 traverse the membrane as a helical segment; the sequence is MILQFGFTTIFVAAFPLAPLL. Topologically, residues 702–733 are cytoplasmic; the sequence is ALLNNIIEIRLDAYKFVTQWRRPLASRAKDIG. The helical transmembrane segment at 734-754 threads the bilayer; the sequence is IWYGILEGIGILSVITNAFVI. At 755-850 the chain is on the extracellular side; that stretch reads AITSDFIPRL…QFWHVLAARL (96 aa). N-linked (GlcNAc...) asparagine glycans are attached at residues N789 and N802. A helical membrane pass occupies residues 851–871; sequence AFIIVFEHLVFCIKHLISYLI. Topologically, residues 872–920 are cytoplasmic; that stretch reads PDLPKDLRDRMRREKYLIQEMMYEAELERLQKERKERKKNGKAHHNEWP.

It belongs to the anoctamin family.

The protein localises to the cell membrane. It carries out the reaction a 1,2-diacyl-sn-glycero-3-phospho-L-serine(in) = a 1,2-diacyl-sn-glycero-3-phospho-L-serine(out). It catalyses the reaction a beta-D-galactosyl-(1&lt;-&gt;1')-N-acylsphing-4-enine(out) = a beta-D-galactosyl-(1&lt;-&gt;1')-N-acylsphing-4-enine(in). The catalysed reaction is a 1,2-diacyl-sn-glycero-3-phosphocholine(in) = a 1,2-diacyl-sn-glycero-3-phosphocholine(out). Its function is as follows. Has calcium-dependent phospholipid scramblase activity; scrambles phosphatidylserine, phosphatidylcholine and galactosylceramide. Does not exhibit calcium-activated chloride channel (CaCC) activity. This is Anoctamin-4 from Bos taurus (Bovine).